The chain runs to 177 residues: Bifunctional protein PyrR (177 aa).

Positions 99-111 (VVLVDDVLYTGRT) match the PRPP-binding motif.

Belongs to the purine/pyrimidine phosphoribosyltransferase family. PyrR subfamily. Homodimer and homohexamer; in equilibrium.

It carries out the reaction UMP + diphosphate = 5-phospho-alpha-D-ribose 1-diphosphate + uracil. Regulates transcriptional attenuation of the pyrimidine nucleotide (pyr) operon by binding in a uridine-dependent manner to specific sites on pyr mRNA. This disrupts an antiterminator hairpin in the RNA and favors formation of a downstream transcription terminator, leading to a reduced expression of downstream genes. Its function is as follows. Also displays a weak uracil phosphoribosyltransferase activity which is not physiologically significant. In Clostridioides difficile (strain 630) (Peptoclostridium difficile), this protein is Bifunctional protein PyrR.